The primary structure comprises 614 residues: Cathepsin F (614 aa).

An N-terminal signal peptide occupies residues 1–20; it reads MRLFAAATVALVLLLGQAAG. Residues 21–393 constitute a propeptide, activation peptide; sequence EELAEERAGQ…AAVVPAYHGE (373 aa). Positions 25 to 50 are disordered; it reads EERAGQAQGDAESTESSETTTDQAVS. Over residues 29–45 the composition is skewed to low complexity; the sequence is GQAQGDAESTESSETTT. Asn151 is a glycosylation site (N-linked (GlcNAc...) asparagine). 2 cysteine pairs are disulfide-bonded: Cys415–Cys456 and Cys449–Cys489. Cys418 is an active-site residue. N-linked (GlcNAc...) asparagine glycans are attached at residues Asn492 and Asn510. Cys548 and Cys602 are oxidised to a cystine. Residues His555 and Asn581 contribute to the active site.

Belongs to the peptidase C1 family.

It catalyses the reaction The recombinant enzyme cleaves synthetic substrates with Phe and Leu (better than Val) in P2, with high specificity constant (kcat/Km) comparable to that of cathepsin L.. Functionally, may have a role in autophagic cell death. The chain is Cathepsin F from Drosophila melanogaster (Fruit fly).